A 92-amino-acid chain; its full sequence is Small ribosomal subunit protein uS19c (92 aa).

Belongs to the universal ribosomal protein uS19 family.

It localises to the plastid. The protein localises to the chloroplast. Functionally, protein S19 forms a complex with S13 that binds strongly to the 16S ribosomal RNA. The chain is Small ribosomal subunit protein uS19c (rps19) from Guillardia theta (Cryptophyte).